The chain runs to 220 residues: HTH-type transcriptional repressor KstR (220 aa).

Residues 36-96 form the HTH tetR-type domain; it reads RERRKRILDA…SALGREFSRI (61 aa). The H-T-H motif DNA-binding region spans 59–78; it reads QMRAVADRADVAVGTLYRYF.

Homodimer.

Its function is as follows. Controls the expression of genes used for utilizing diverse lipids as energy sources. The polypeptide is HTH-type transcriptional repressor KstR (kstR) (Mycobacterium tuberculosis (strain ATCC 25618 / H37Rv)).